Reading from the N-terminus, the 507-residue chain is E3 ubiquitin-protein ligase makorin-3 (507 aa).

Residues 1–21 (MEEPAAPSEAHEAAGAQAGAE) show a composition bias toward low complexity. 2 disordered regions span residues 1 to 48 (MEEP…DSAL) and 69 to 89 (RGGL…PLPS). The C3H1-type 1 zinc finger occupies 95-122 (WTKQIICRYYIHGQCKEGENCRYSHDLS). Residues 126–149 (MATEGGVSPPGASAGGGPSTAAHI) form a disordered region. The C3H1-type 2 zinc-finger motif lies at 238-265 (GSGLRFCYYASRGVCFRGESCMYLHGDI). The makorin-type Cys-His stretch occupies residues 266–293 (CDMCGLQTLHPMDAAQREEHMRACIEAH). The RING-type zinc-finger motif lies at 311 to 365 (CGICMEVVYEKANPNDRRFGILSNCNHSFCIRCIRRWRSARQFENRIVKSCPQCR). A C3H1-type 3 zinc finger spans residues 394 to 423 (AMSNKACRYFAEGRGNCPFGDTCFYKHEYP).

In terms of tissue distribution, ubiquitous.

Its subcellular location is the nucleus. It carries out the reaction S-ubiquitinyl-[E2 ubiquitin-conjugating enzyme]-L-cysteine + [acceptor protein]-L-lysine = [E2 ubiquitin-conjugating enzyme]-L-cysteine + N(6)-ubiquitinyl-[acceptor protein]-L-lysine.. Its pathway is protein modification; protein ubiquitination. E3 ubiquitin ligase catalyzing the covalent attachment of ubiquitin moieties onto substrate proteins. Acts as a key developmental timer that helps ensure puberty begins at the appropriate age, by inhibiting premature activation of the reproductive hormone cascade. Epigenetically regulates GNRH1 transcription by disrupting the binding of methyl-DNA binding protein 3/MBD3 to the promoter of GNRH1. Mechanistically, mediates the non-proteolytic ubiquitination of MBD3 at multiple sites with 'Lys27' ubiquitin linkages and thereby regulates the methylation status of the genome, including GNRH1 promoter. Modulates the stability and translation of GNRH1 mRNA by mediating the non-proteolytic ubiquitination of PABP family members PABPC1, PABPC3 and PABPC4 at multiple sites. Also participates in the maintenance of genomic and epigenomic stability by regulating the abundance of APEX2 via 'Lys-48'-linked ubiquitination. In Homo sapiens (Human), this protein is E3 ubiquitin-protein ligase makorin-3 (MKRN3).